A 499-amino-acid polypeptide reads, in one-letter code: ADP,ATP carrier protein 5 (499 aa).

The next 11 helical transmembrane spans lie at 25 to 45 (LGKF…QNVL), 61 to 81 (IAGF…VIIY), 93 to 113 (IFYY…FVIY), 148 to 168 (YIVY…LLFW), 183 to 203 (FYTL…FLMM), 223 to 243 (ITLV…CCLL), 286 to 306 (LWLL…VEAV), 327 to 347 (LYIL…NNIM), 356 to 376 (AVIS…LIVF), 380 to 400 (ILSL…VSIG), and 468 to 488 (LISP…IYAV).

It belongs to the ADP/ATP translocase tlc family.

It is found in the cell membrane. Its function is as follows. Provides the rickettsial cell with host ATP in exchange for rickettsial ADP. This is an obligate exchange system. This energy acquiring activity is an important component of rickettsial parasitism. The protein is ADP,ATP carrier protein 5 (tlcE) of Rickettsia conorii (strain ATCC VR-613 / Malish 7).